The primary structure comprises 278 residues: 1-acyl-sn-glycerol-3-phosphate acyltransferase beta (278 aa).

The N-terminal stretch at 1–23 (MDPWPWLTAALLLLLLLVQLSRT) is a signal peptide. The Lumenal segment spans residues 24–29 (ARFYAK). The chain crosses the membrane as a helical span at residues 30-50 (VGLYCVLCLSFSAAASIVCLL). Topologically, residues 51 to 121 (RHGGRTVDNM…PKRCVQIAKR (71 aa)) are cytoplasmic. Residues 98 to 103 (HQSILD) carry the HXXXXD motif motif. Residues 122–142 (ELMFTGPVGLIMYLGGVYFIN) traverse the membrane as a helical segment. Residues 143 to 278 (RQQARTAMSV…IKEPGVLPAQ (136 aa)) lie on the Lumenal side of the membrane. Residues 172-175 (EGTR) carry the EGTR motif motif.

The protein belongs to the 1-acyl-sn-glycerol-3-phosphate acyltransferase family. In terms of tissue distribution, expressed at high levels in the liver, at intermediate levels in the kidney, gut, heart and skeletal muscles. Undetectable in brain and spleen.

The protein localises to the endoplasmic reticulum membrane. It catalyses the reaction a 1-acyl-sn-glycero-3-phosphate + an acyl-CoA = a 1,2-diacyl-sn-glycero-3-phosphate + CoA. It carries out the reaction 1-(9Z-octadecenoyl)-sn-glycero-3-phosphate + (9Z)-octadecenoyl-CoA = 1,2-di-(9Z-octadecenoyl)-sn-glycero-3-phosphate + CoA. The enzyme catalyses 1-(9Z-octadecenoyl)-sn-glycero-3-phosphate + hexadecanoyl-CoA = 1-(9Z)-octadecenoyl-2-hexadecanoyl-sn-glycero-3-phosphate + CoA. The catalysed reaction is heptadecanoyl-CoA + 1-(9Z-octadecenoyl)-sn-glycero-3-phosphate = 1-(9Z)-octadecenoyl-2-heptadecanoyl-sn-glycero-3-phosphate + CoA. It catalyses the reaction 1-(9Z-octadecenoyl)-sn-glycero-3-phosphate + (9Z,12Z)-octadecadienoyl-CoA = 1-(9Z)-octadecenoyl-2-(9Z,12Z)-octadecadienoyl-sn-glycero-3-phosphate + CoA. It carries out the reaction 1-(9Z-octadecenoyl)-sn-glycero-3-phosphate + tetradecanoyl-CoA = 1-(9Z)-octadecenoyl-2-tetradecanoyl-sn-glycero-3-phosphate + CoA. The enzyme catalyses pentadecanoyl-CoA + 1-(9Z-octadecenoyl)-sn-glycero-3-phosphate = 1-(9Z)-octadecenoyl-2-pentadecanoyl-sn-glycero-3-phosphate + CoA. The catalysed reaction is 1-hexadecanoyl-sn-glycero-3-phosphate + (9Z)-octadecenoyl-CoA = 1-hexadecanoyl-2-(9Z-octadecenoyl)-sn-glycero-3-phosphate + CoA. It catalyses the reaction 1-tetradecanoyl-sn-glycerol 3-phosphate + (9Z)-octadecenoyl-CoA = 1-tetradecanoyl-2-(9Z)-octadecenoyl-sn-glycero-3-phosphate + CoA. It carries out the reaction 1-(9Z,12Z,15Z)-octadecatrienoyl-sn-glycero-3-phosphate + (9Z)-octadecenoyl-CoA = 1-(9Z,12Z,15Z)-octadecatrienoyl-2-(9Z)-octadecenoyl-sn-glycero-3-phosphate + CoA. The enzyme catalyses 1-(6Z,9Z,12Z-octadecatrienoyl)-sn-glycero-3-phosphate + (9Z)-octadecenoyl-CoA = (6Z,9Z,12Z)-octadecatrienoyl-2-(9Z)-octadecenoyl-sn-glycero-3-phosphate + CoA. The catalysed reaction is 1-eicosanoyl-sn-glycero-3-phosphate + (9Z)-octadecenoyl-CoA = 1-eicosanoyl-2-(9Z)-octadecenoyl-sn-glycero-3-phosphate + CoA. It catalyses the reaction 1-hexadecanoyl-sn-glycero-3-phosphate + octadecanoyl-CoA = 1-hexadecanoyl-2-octadecanoyl-sn-glycero-3-phosphate + CoA. It carries out the reaction 1-hexadecanoyl-sn-glycero-3-phosphate + (5Z,8Z,11Z,14Z)-eicosatetraenoyl-CoA = 1-hexadecanoyl-2-(5Z,8Z,11Z,14Z-eicosatetraenoyl)-sn-glycero-3-phosphate + CoA. The enzyme catalyses 1-hexadecanoyl-sn-glycero-3-phosphate + hexadecanoyl-CoA = 1,2-dihexadecanoyl-sn-glycero-3-phosphate + CoA. The catalysed reaction is 1-hexadecanoyl-sn-glycero-3-phosphate + tetradecanoyl-CoA = 1-hexadecanoyl-2-tetradecanoyl-sn-glycero-3-phosphate + CoA. It catalyses the reaction (11Z)-octadecenoyl-CoA + 1-(9Z-octadecenoyl)-sn-glycero-3-phosphate = 1-(9Z)-octadecenoyl-2-(11Z)-octadecenoyl-sn-glycero-3-phosphate + CoA. It participates in phospholipid metabolism; CDP-diacylglycerol biosynthesis; CDP-diacylglycerol from sn-glycerol 3-phosphate: step 2/3. In terms of biological role, converts 1-acyl-sn-glycerol-3-phosphate (lysophosphatidic acid or LPA) into 1,2-diacyl-sn-glycerol-3-phosphate (phosphatidic acid or PA) by incorporating an acyl moiety at the sn-2 position of the glycerol backbone. The protein is 1-acyl-sn-glycerol-3-phosphate acyltransferase beta (Agpat2) of Mus musculus (Mouse).